Here is a 1088-residue protein sequence, read N- to C-terminus: Protein argonaute 18 (1088 aa).

The interval 1–220 (MASRGGGQHQ…QPPPDLPQAP (220 aa)) is disordered. 6 stretches are compositionally biased toward gly residues: residues 20-30 (GGYGRGGGGGR), 51-86 (YPGG…GQGR), 95-127 (GRGY…GGYH), 135-148 (GRGG…GGGY), 161-182 (ARGG…YGRG), and 191-206 (GRGG…GGGS). Pro residues predominate over residues 211–220 (QPPPDLPQAP). Residues 477-574 (TVGYFLNNYG…LPMELCNIVP (98 aa)) form the PAZ domain. The Piwi domain occupies 747-1056 (LLLVVMTDDK…LAFRARFYLT (310 aa)).

The protein belongs to the argonaute family. Ago subfamily.

Probably involved in the RNA silencing pathway. May bind to short RNAs such as microRNAs (miRNAs) or short interfering RNAs (siRNAs), and represses the translation of mRNAs which are complementary to them. In Oryza sativa subsp. japonica (Rice), this protein is Protein argonaute 18 (AGO18).